The following is a 463-amino-acid chain: L-seryl-tRNA(Sec) selenium transferase (463 aa).

Lys-295 carries the N6-(pyridoxal phosphate)lysine modification.

It belongs to the SelA family. In terms of assembly, homodecamer; pentamer of dimers. Binds only one seryl-tRNA(Sec) per dimer. The cofactor is pyridoxal 5'-phosphate.

It localises to the cytoplasm. The enzyme catalyses L-seryl-tRNA(Sec) + selenophosphate + H(+) = L-selenocysteinyl-tRNA(Sec) + phosphate. It participates in aminoacyl-tRNA biosynthesis; selenocysteinyl-tRNA(Sec) biosynthesis; selenocysteinyl-tRNA(Sec) from L-seryl-tRNA(Sec) (bacterial route): step 1/1. Converts seryl-tRNA(Sec) to selenocysteinyl-tRNA(Sec) required for selenoprotein biosynthesis. The protein is L-seryl-tRNA(Sec) selenium transferase of Escherichia coli O7:K1 (strain IAI39 / ExPEC).